Reading from the N-terminus, the 201-residue chain is Small ribosomal subunit protein uS4 (201 aa).

Positions 20-46 (SGTGKELSRRPYAPGQHGQDRRGSLSE) are disordered. Residues 93–156 (RRLDNVVYRL…KDLQIVKEAL (64 aa)) form the S4 RNA-binding domain.

It belongs to the universal ribosomal protein uS4 family. Part of the 30S ribosomal subunit. Contacts protein S5. The interaction surface between S4 and S5 is involved in control of translational fidelity.

Functionally, one of the primary rRNA binding proteins, it binds directly to 16S rRNA where it nucleates assembly of the body of the 30S subunit. Its function is as follows. With S5 and S12 plays an important role in translational accuracy. The protein is Small ribosomal subunit protein uS4 of Ligilactobacillus salivarius (strain UCC118) (Lactobacillus salivarius).